The sequence spans 3925 residues: MPRWRPTWLKRLSCPKQPRHPTHPKHPTHPKHPKHPKHPRHPKHPRISRRCSSASARGKWISTTSSTWFDGDHVNKKDILLAYREGLLDTGSAQRVLDALRERSASAPLSSVEQGIWATQRAAPGSTAYHVPVVLHVARALDIDALRRACLDLALAFPILTSTIVERDGEPRRAAFSSAPAQLRHERVGALSDDALAARLADAKREPFDLRAGPLWRLFAFERGRADFVLMLVVHHLSYDGASTLPLVDTLLAMHDARAAGATPAIEPFAPAHDAYVADEARWLASADAAATLDYWRRALDGAPPALELPLDRPRPAQQTFNGKVVQRALPEVLGERAAAFAAQGGLTRAALFLAVFKLLLSRYAAQDDIVVGVPVSRRPLAARGAVGNFVNLLPLRSRVDARLTFAAFAAQVQGTLNAGRDHAAYPFPELVKRLNVPRDAALAPVFQALFAYQNFAGADAEAAFCARHRARFLQIEHQAGESEIGVEVFERASASVVHLKFNPDLFDDASAARMLDHFVHLLDATLADPRRPLADYPLVTPAERERIVSRWNATAAPYPDDRCLHELVDEHARTRADARAVSDARDALGFGELKRRSDAIAAALVDAGAAPRALVGVCMTRSVDLLAALIGVMKAGAAYVPLDPRYPDARLRAIVDDAQLEHVLTDAESAPVAAPLCADGARVMLDAARCAAGGSRAPLPRATPDDLAYVIYTSGSTGKPKGVMVPHRAVVNLLCSMARAPGMAAGERMLALATYAFDMSVPELFLPLAVGGECMLAQADAARDPRVLMEAIAERRPTIMQITPTACAMLFEAGWRNAERVALLCGAEPLTETVRRRLAETGTRAWNMYGPTETTVWSTMAPIAADRPITLGAPLANTRVYIVDGQDRLLPPGLYGEMVIAGDGVARGYLGRPELSAERFVRDPFVNAGRGANAYRTGDIARWRDDGSLEFAGRSDAQVKLRGFRIELGDIEAHLKRHPAIEDAVAVVNEAHGLKRLVGYVVVRGGAAAPSWSALRSWLLAALPAHMVPACYEALPAVPLTPNGKIDRRGLAARPLAAAAGAQAADGLEAGGLVGGLEGEVLALWRETLKVGDIGPTDGFFDAGGDSILAVALAARIEQRFGVTFSATTLFKYACVRDIAGYIASAEARPRAGGANARAGVEAGAAVATPPGRPAGEAAGAQRDRAPRAADERADAPPAAPSDAHASKAAAIDSRGGAAGGDGEPARAASHGDAPADGLAIIGIALRVPGAADARAFWRNLREGRSALERLDARRLMAHGVASALAGARQTVGVRATIADKHRFDAEFFGVSMRDAALMDPQARQLLQHAWLAFEDAGYVPADAPDTAVFVSASHSRYAAKQADGARAAAEAVLDDPADYVGWILEQGGTIPALISYKLGLTGPSLYVHTNCSSSLAALYAAWQTIRAGDAKQALVAAATLFADERLGYVHQPGLNFSSDGRIKTFDRNADGMVPGEGVVAVLVKRVAEALADGDRIYAIVRDVALNNDGAAKAGFYAPSVRGQAQVIDALLRRTGVRAADIVYVEAHGTGTQIGDPIEVAALTDAYRAHGAGTGHCGLGSVKTNVGHLDTAAGLVGLVKVALSLEQRMLPPSLNFDAPNPALDLASSPFYVVERATPIAPRAGRTFAAVSAFGVGGTNAHALVEAHRDARDAAIATGATGAPDVPDAPDAPDAPDAQTVVPLSAKTPAQLTQRAAQLLDALRGDDARRPALADVAFTLQRGRQPMGSRAAFVVDSIDMLCEQLAAYVAAGGAHAPRGAARADATHAHAGDAHRLAERWVAGDDVDWRALSRGGRRIGLPGYPFGGDVYGGARDAHDPSRRLHPLLHRNVSTLSQVAFTSTFDGGEPFLRDHLLHGRRVLPGAAYLEMIHAAAERALAPAAGAGAGVALANVVWVRPVEVVDASVTVRLAFAPADDDGLVAFEIRSETAGGGGALHCRGHVQRIAEPAPGQIDLHALRERCAAPRLSAARCYETYARLGLDYGPSHRGVVDVRGEREHLLARIVLAGLPDADARPMHAGLVDSAFQATLAAVAETPDELERLDAAPVPFALGRLDVLAPCAPQMWASIRVRRIGGAHADGGRTASDDALLAKIDIDLVDDAGNVCVRVRDLAARRFVREPARAPSRTLAVRARWRGARASGVPGASGGVPREVVLVGVDARAAEPIRAALGASGVACEVWPIPADADPAGQFAALAARVLERLQAAVRARPTSPRLLQLVSLDDAPWFAAALAAMLKTAALEQPCVLGQQIALPSRLSPARIAAALADCAAMPDARRLRFGANDADADADGALEVETFAELDAWPEQAAPPWKAGGVYLVTGGGGRIARRLIDAIAAHAANATVVVASRTQPGAARADARHATDASDTPHAPGVTVDRIALDVTDGARVRDAVRSIVSRHGRLDGVLHGAGVLDDDFILNKDARALHAVIAPKAQGAWHLDAATASLDLDCFVLFSSVAGALGNAGQVDYSGANAFMDAFAHWRRARVAAGERRGRTVSIGWPLWAEGGMRIDDASLAALERSLGMRPMPTPAAIGALYAALACGESHVVLFHGDPAPLRRAAWLAASAPTQDDPAAASIEPAASSTELPEMNVQATAPADAGARPRDDAPAAAVAHAAPDASDAPDARPADAAPADDARLTEHALALLKRLLSTALHTPASRLDAHAPLERYGIDSIVVVSMNGELEKAFGSLSKTLFFEYRTLHELACYFVAHHRERLARLLPAGHGARLAPAPAQPLAPRAPSAEPARDAARSLEPEQGQGQGQGQEPEPASQTAAASESARAPAQASAHARRERAAPETRTQAPAQAHAPAQASAPDAARDAFDIAIVGLAGRYPGADSVDAFWANLRDGRDCVTEVPAERWDHARYFHPDKAHPGTTYAKWGGFVDGVDRFDAAFFNMSPREAAIVDPQERLFLETVYEAIEDAGYTPRTLAGGAGRDAAVGVYVGVMYQEYQLYGAQASALGEPCALPSSPSSIANRVSFFCDFDGPSIAVDTMCSSSLTAIHLACQSLRSGECAAAVAGGVNLTLHPNKYLLLSFGRFASSKGRCESFGAGGDGYVPAEGVGAVVLKPLARARADGDHVYGVIKGSALNHGGRTNGFTVPNPASQRRVILRALREAGVDPRRLGYVEAHGTGTSLGDPIEIDALSRAFAEFTQDKQFCPIGSVKSNIGHAESAAGVAALTKVLMQLKHDTLAPSLHADVLNPNIDFAATPFYVQRERADWPPAVDAGEAGGVARRRPRVCAVSSFGAGGSNAHLIVEEYVASDGERAVRSASDQLVVLSARSPEQLRERARRLRARLLADAGGTPLDALAYTLQVGREAMAYRFATIVATRDALAARLDALANDALFDGQALPGDADGFARRAERDETLVSLARDDAFRDAVGRWVAEGQLARLAQLWVRGVDLDWTLLHRSPPARISLPTYPFKRDRHWGVPNLAGLPGAAGVANVAGVAGAAGPAGVEHAASGAGAASVASAAGAASAASTASTASRAGTPSPAVAASTGETVAAPASHDAFATAGAKPGVVLAPATAAGYVATPRPKPTVMLDTDAAAAARARPGAASSPSPSSPSPLPSSPPRMSSRQHASPAAAPDPRAALLDIEAFLAGSLAAALMATTDEIDREQTFNALGVDSIVGVEWVRAINDRYGTALPATVIYDHPSVRAMARHVSSNATPGVAGVARGDASAPQAAPSAFAAAASSASGAVSPAPFASAAPPEPPASPARADGALDAAGATSLDAIRAHLVDSLAQALYVEPAEIGVDQPFAELGLDSIVGVEWITAVNRRFGTALPAVAIYDHPSVVALARFVGTQLGARLPAAQAARAGAFAGVEPGEPDARALPAAARAAAPPAHTDAAAHTDTDALLRAIERGELDAGDADAIWRRMQSRAARPEPLAQP.

The segment at Met1–Ala56 is disordered. The span at Gln17–Arg49 shows a compositional bias: basic residues. A Carrier 1 domain is found at Gly1073–Glu1148. An O-(pantetheine 4'-phosphoryl)serine modification is found at Ser1108. The span at Ala1166–Ala1182 shows a compositional bias: low complexity. The tract at residues Ala1166 to Gly1233 is disordered. Residues Gln1183–Asp1196 are compositionally biased toward basic and acidic residues. The segment covering Pro1202–Arg1216 has biased composition (low complexity). A Ketosynthase family 3 (KS3) 1 domain is found at Ala1237–Ala1667. Active-site for beta-ketoacyl synthase 1 activity residues include Cys1413, His1549, and His1589. The disordered stretch occupies residues Gly1679–Ala1698. The N-terminal hotdog fold stretch occupies residues His1844–Ala1969. The PKS/mFAS DH domain occupies His1844–Arg2143. The active-site Proton acceptor; for dehydratase activity is the His1873. Residues Ala1983–Arg2143 form a C-terminal hotdog fold region. Asp2043 functions as the Proton donor; for dehydratase activity in the catalytic mechanism. 2 stretches are compositionally biased toward low complexity: residues Asp2594–Ser2607 and Pro2632–Ala2646. Disordered stretches follow at residues Asp2594–Met2613 and Ala2619–Ala2657. Residues Glu2664–His2737 enclose the Carrier 2 domain. At Ser2698 the chain carries O-(pantetheine 4'-phosphoryl)serine. The span at Leu2753–Ala2768 shows a compositional bias: low complexity. The interval Leu2753–Pro2841 is disordered. Residues Pro2770–Glu2779 are compositionally biased toward basic and acidic residues. 2 stretches are compositionally biased toward low complexity: residues Gly2789–Ala2813 and Glu2823–Pro2841. Positions Ala2847–Glu3286 constitute a Ketosynthase family 3 (KS3) 2 domain. Catalysis depends on for beta-ketoacyl synthase 2 activity residues Cys3022, His3157, and His3197. Low complexity-rich tracts occupy residues Ala3512–Ala3524 and Ala3578–Ser3592. Disordered stretches follow at residues Ala3512–Glu3531 and Ala3578–Asp3619. Residues Pro3593–Pro3603 are compositionally biased toward pro residues. Low complexity predominate over residues Pro3604–Asp3619. Positions Ala3622 to Ala3699 constitute a Carrier 3 domain. Ser3659 is modified (O-(pantetheine 4'-phosphoryl)serine). The interval Pro3734–Gly3754 is disordered. One can recognise a Carrier 4 domain in the interval Thr3762–Leu3839. Ser3799 carries the post-translational modification O-(pantetheine 4'-phosphoryl)serine.

This sequence belongs to the ATP-dependent AMP-binding enzyme family. Pantetheine 4'-phosphate serves as cofactor.

It is found in the cytoplasm. It participates in antibiotic biosynthesis. Its function is as follows. Involved in production of the polyketide antibiotic thailandamide. This Burkholderia thailandensis (strain ATCC 700388 / DSM 13276 / CCUG 48851 / CIP 106301 / E264) protein is Polyketide synthase ThaH.